We begin with the raw amino-acid sequence, 137 residues long: Methylglyoxal synthase (137 aa).

The region spanning 1–137 is the MGS-like domain; sequence MKIALIAHDK…DLLRGEEPNV (137 aa). Residues H8, K12, 34 to 37, and 54 to 55 contribute to the substrate site; these read TGTT and SG. D60 serves as the catalytic Proton donor/acceptor. H87 is a binding site for substrate.

Belongs to the methylglyoxal synthase family.

The catalysed reaction is dihydroxyacetone phosphate = methylglyoxal + phosphate. Catalyzes the formation of methylglyoxal from dihydroxyacetone phosphate. This Bacillus subtilis (strain 168) protein is Methylglyoxal synthase.